A 267-amino-acid chain; its full sequence is Pyrroline-5-carboxylate reductase (267 aa).

This sequence belongs to the pyrroline-5-carboxylate reductase family.

The protein localises to the cytoplasm. It catalyses the reaction L-proline + NADP(+) = (S)-1-pyrroline-5-carboxylate + NADPH + 2 H(+). The catalysed reaction is L-proline + NAD(+) = (S)-1-pyrroline-5-carboxylate + NADH + 2 H(+). Its pathway is amino-acid biosynthesis; L-proline biosynthesis; L-proline from L-glutamate 5-semialdehyde: step 1/1. Catalyzes the reduction of 1-pyrroline-5-carboxylate (PCA) to L-proline. The chain is Pyrroline-5-carboxylate reductase from Synechocystis sp. (strain ATCC 27184 / PCC 6803 / Kazusa).